We begin with the raw amino-acid sequence, 298 residues long: Short-chain dehydrogenase reductase 4 (298 aa).

50 to 74 provides a ligand contact to NAD(+); it reads IITGGASGIGAEAVRLFTDHGAKVV. Ser182 contacts substrate. The Proton acceptor role is filled by Tyr195.

This sequence belongs to the short-chain dehydrogenases/reductases (SDR) family.

The polypeptide is Short-chain dehydrogenase reductase 4 (SDR4) (Arabidopsis thaliana (Mouse-ear cress)).